The following is a 405-amino-acid chain: Argininosuccinate synthase (405 aa).

Residues 11–19 (AYSGGLDTS) and A38 each bind ATP. Residues Y91 and S96 each contribute to the L-citrulline site. G121 is an ATP binding site. L-aspartate contacts are provided by T123, N127, and D128. N127 is a binding site for L-citrulline. Residues R131, S182, S191, E267, and Y279 each contribute to the L-citrulline site.

The protein belongs to the argininosuccinate synthase family. Type 1 subfamily. In terms of assembly, homotetramer.

It localises to the cytoplasm. It catalyses the reaction L-citrulline + L-aspartate + ATP = 2-(N(omega)-L-arginino)succinate + AMP + diphosphate + H(+). It participates in amino-acid biosynthesis; L-arginine biosynthesis; L-arginine from L-ornithine and carbamoyl phosphate: step 2/3. This is Argininosuccinate synthase from Sphingopyxis alaskensis (strain DSM 13593 / LMG 18877 / RB2256) (Sphingomonas alaskensis).